Consider the following 268-residue polypeptide: Taurine import ATP-binding protein TauB (268 aa).

An ABC transporter domain is found at 4–236 (LSIENISMRF…MGVNADLREV (233 aa)). 41–48 (GPSGCGKT) is an ATP binding site.

The protein belongs to the ABC transporter superfamily. Taurine importer (TC 3.A.1.17.1) family. In terms of assembly, the complex is composed of two ATP-binding proteins (TauB), two transmembrane proteins (TauC) and a solute-binding protein (TauA).

It localises to the cell inner membrane. The enzyme catalyses taurine(out) + ATP + H2O = taurine(in) + ADP + phosphate + H(+). Its function is as follows. Part of the ABC transporter complex TauABC involved in taurine import. Responsible for energy coupling to the transport system. In Ruegeria pomeroyi (strain ATCC 700808 / DSM 15171 / DSS-3) (Silicibacter pomeroyi), this protein is Taurine import ATP-binding protein TauB.